The sequence spans 436 residues: GTPase Der (436 aa).

2 EngA-type G domains span residues 3–168 (PLIA…PESD) and 177–352 (IRLA…QNRS). GTP is bound by residues 9 to 16 (GRPNVGKS), 56 to 60 (DTGGY), 120 to 123 (NKAE), 183 to 190 (GRPNVGKS), 230 to 234 (DTAGL), and 295 to 298 (NKWD). A KH-like domain is found at 353 to 436 (RKISTSALNR…VTISLRFMQK (84 aa)).

This sequence belongs to the TRAFAC class TrmE-Era-EngA-EngB-Septin-like GTPase superfamily. EngA (Der) GTPase family. As to quaternary structure, associates with the 50S ribosomal subunit.

In terms of biological role, GTPase that plays an essential role in the late steps of ribosome biogenesis. In Chlorobium luteolum (strain DSM 273 / BCRC 81028 / 2530) (Pelodictyon luteolum), this protein is GTPase Der.